We begin with the raw amino-acid sequence, 208 residues long: Small ribosomal subunit protein eS8 (208 aa).

The disordered stretch occupies residues 1–27; that stretch reads MGISRDNWHKRRKTGGKRKPYHKKRKY. Gly-2 carries the N-myristoyl glycine lipid modification. The segment covering 8-26 has biased composition (basic residues); sequence WHKRRKTGGKRKPYHKKRK. An N6-acetyllysine mark is found at Lys-37 and Lys-128. Thr-130 carries the post-translational modification Phosphothreonine. Ser-160 carries the phosphoserine modification. Glycyl lysine isopeptide (Lys-Gly) (interchain with G-Cter in SUMO2) cross-links involve residues Lys-170 and Lys-193.

This sequence belongs to the eukaryotic ribosomal protein eS8 family. Component of the small ribosomal subunit. Identified in a IGF2BP1-dependent mRNP granule complex containing untranslated mRNAs. Part of the small subunit (SSU) processome, composed of more than 70 proteins and the RNA chaperone small nucleolar RNA (snoRNA) U3.

Its subcellular location is the cytoplasm. It is found in the membrane. It localises to the nucleus. The protein localises to the nucleolus. Component of the small ribosomal subunit. The ribosome is a large ribonucleoprotein complex responsible for the synthesis of proteins in the cell. Part of the small subunit (SSU) processome, first precursor of the small eukaryotic ribosomal subunit. During the assembly of the SSU processome in the nucleolus, many ribosome biogenesis factors, an RNA chaperone and ribosomal proteins associate with the nascent pre-rRNA and work in concert to generate RNA folding, modifications, rearrangements and cleavage as well as targeted degradation of pre-ribosomal RNA by the RNA exosome. The polypeptide is Small ribosomal subunit protein eS8 (RPS8) (Oryctolagus cuniculus (Rabbit)).